Reading from the N-terminus, the 99-residue chain is Large ribosomal subunit protein uL23 (99 aa).

It belongs to the universal ribosomal protein uL23 family. In terms of assembly, part of the 50S ribosomal subunit. Contacts protein L29, and trigger factor when it is bound to the ribosome.

One of the early assembly proteins it binds 23S rRNA. One of the proteins that surrounds the polypeptide exit tunnel on the outside of the ribosome. Forms the main docking site for trigger factor binding to the ribosome. The sequence is that of Large ribosomal subunit protein uL23 from Synechococcus sp. (strain JA-2-3B'a(2-13)) (Cyanobacteria bacterium Yellowstone B-Prime).